A 133-amino-acid polypeptide reads, in one-letter code: Mediator of RNA polymerase II transcription subunit 10 (133 aa).

It belongs to the Mediator complex subunit 10 family. In terms of assembly, component of the Mediator complex. Interacts with MED4 and MED21.

Its subcellular location is the nucleus. Functionally, component of the Mediator complex, a coactivator involved in the regulated transcription of nearly all RNA polymerase II-dependent genes. Mediator functions as a bridge to convey information from gene-specific regulatory proteins to the basal RNA polymerase II transcription machinery. Mediator is recruited to promoters by direct interactions with regulatory proteins and serves as a scaffold for the assembly of a functional preinitiation complex with RNA polymerase II and the general transcription factors. Required for activated transcription of the MtnA, MtnB and MtnD genes. This chain is Mediator of RNA polymerase II transcription subunit 10 (MED10), found in Drosophila melanogaster (Fruit fly).